The chain runs to 553 residues: Putative ABC transporter ATP-binding protein BCE_3323 (553 aa).

ABC transporter domains lie at 7-245 and 295-527; these read AEIN…FRPF and LSAE…SINR. ATP-binding positions include 41 to 48 and 329 to 336; these read GGSGSGKT and GKNGTGKS.

It belongs to the ABC transporter superfamily.

It localises to the cell membrane. Probably part of an ABC transporter complex. Responsible for energy coupling to the transport system. The chain is Putative ABC transporter ATP-binding protein BCE_3323 from Bacillus cereus (strain ATCC 10987 / NRS 248).